Reading from the N-terminus, the 437-residue chain is Methylenetetrahydrofolate--tRNA-(uracil-5-)-methyltransferase TrmFO (437 aa).

8-13 (GAGLAG) contributes to the FAD binding site.

Belongs to the MnmG family. TrmFO subfamily. FAD serves as cofactor.

The protein localises to the cytoplasm. The catalysed reaction is uridine(54) in tRNA + (6R)-5,10-methylene-5,6,7,8-tetrahydrofolate + NADH + H(+) = 5-methyluridine(54) in tRNA + (6S)-5,6,7,8-tetrahydrofolate + NAD(+). The enzyme catalyses uridine(54) in tRNA + (6R)-5,10-methylene-5,6,7,8-tetrahydrofolate + NADPH + H(+) = 5-methyluridine(54) in tRNA + (6S)-5,6,7,8-tetrahydrofolate + NADP(+). Its function is as follows. Catalyzes the folate-dependent formation of 5-methyl-uridine at position 54 (M-5-U54) in all tRNAs. This Desulfitobacterium hafniense (strain Y51) protein is Methylenetetrahydrofolate--tRNA-(uracil-5-)-methyltransferase TrmFO.